A 513-amino-acid polypeptide reads, in one-letter code: Maturase K (513 aa).

Belongs to the intron maturase 2 family. MatK subfamily.

The protein resides in the plastid. The protein localises to the chloroplast. Its function is as follows. Usually encoded in the trnK tRNA gene intron. Probably assists in splicing its own and other chloroplast group II introns. This Saccharum officinarum (Sugarcane) protein is Maturase K.